Consider the following 337-residue polypeptide: Meiotic driver wtf4 (337 aa).

Residues 1-29 are compositionally biased toward basic and acidic residues; sequence MKNKDYPLRSSMDELSTKNDNEIDLEKGP. Residues 1 to 40 form a disordered region; the sequence is MKNKDYPLRSSMDELSTKNDNEIDLEKGPLPEYNSEDEST. 6 helical membrane passes run 89 to 109, 119 to 139, 149 to 169, 176 to 196, 210 to 230, and 234 to 254; these read LLIS…CVNP, AFFV…FCFF, CIKV…VGLY, VVII…RSKF, CSIS…FWTL, and FSGL…TKGL.

Belongs to the WTF family. Homomer. Forms protein aggregates. The two isoforms can interact with each other and with themselves. High sequence similarity is required for their interaction.

The protein resides in the spore membrane. It localises to the vacuole membrane. Its subcellular location is the ascus epiplasm. The protein localises to the cytoplasm. It is found in the endoplasmic reticulum membrane. Its function is as follows. Promotes unequal transmission of alleles from the parental zygote to progeny spores by acting as poison/antidote system where the poison and antidote proteins are produced from the same locus; the poison component is trans-acting and targets all spores within an ascus whereas the antidote component is spore-specific, leading to poisoning of all progeny that do not inherit the allele. Functionally, localizes isoform 2 to the vacuole thereby facilitating its degradation. Forms toxic aggregates that disrupt spore maturation. The chain is Meiotic driver wtf4 from Schizosaccharomyces kambucha (Fission yeast).